Reading from the N-terminus, the 806-residue chain is Lon protease (806 aa).

The 194-residue stretch at 13 to 206 folds into the Lon N-terminal domain; sequence LPMMPIRDVV…RVAEMLDIEI (194 aa). 356–363 lines the ATP pocket; that stretch reads GPPGVGKT. Residues 599–780 enclose the Lon proteolytic domain; the sequence is KNEIGAATGL…DEVLKIALER (182 aa). Active-site residues include Ser686 and Lys729.

This sequence belongs to the peptidase S16 family. As to quaternary structure, homohexamer. Organized in a ring with a central cavity.

It localises to the cytoplasm. It carries out the reaction Hydrolysis of proteins in presence of ATP.. Its function is as follows. ATP-dependent serine protease that mediates the selective degradation of mutant and abnormal proteins as well as certain short-lived regulatory proteins. Required for cellular homeostasis and for survival from DNA damage and developmental changes induced by stress. Degrades polypeptides processively to yield small peptide fragments that are 5 to 10 amino acids long. Binds to DNA in a double-stranded, site-specific manner. In Solibacter usitatus (strain Ellin6076), this protein is Lon protease.